Here is a 228-residue protein sequence, read N- to C-terminus: NAD(P)H-hydrate epimerase (228 aa).

The 205-residue stretch at A10–I214 folds into the YjeF N-terminal domain. N58 to D62 serves as a coordination point for (6S)-NADPHX. N59 and D123 together coordinate K(+). Residues G127–P133 and D156 each bind (6S)-NADPHX. S159 is a binding site for K(+).

It belongs to the NnrE/AIBP family. K(+) serves as cofactor.

It carries out the reaction (6R)-NADHX = (6S)-NADHX. It catalyses the reaction (6R)-NADPHX = (6S)-NADPHX. In terms of biological role, catalyzes the epimerization of the S- and R-forms of NAD(P)HX, a damaged form of NAD(P)H that is a result of enzymatic or heat-dependent hydration. This is a prerequisite for the S-specific NAD(P)H-hydrate dehydratase to allow the repair of both epimers of NAD(P)HX. The protein is NAD(P)H-hydrate epimerase of Pediculus humanus subsp. corporis (Body louse).